A 148-amino-acid chain; its full sequence is Transcriptional regulator MraZ (148 aa).

SpoVT-AbrB domains lie at 5–51 (STQL…PQPV) and 80–123 (ASDV…DMAK).

The protein belongs to the MraZ family. In terms of assembly, forms oligomers.

The protein resides in the cytoplasm. It localises to the nucleoid. This Nitrosomonas europaea (strain ATCC 19718 / CIP 103999 / KCTC 2705 / NBRC 14298) protein is Transcriptional regulator MraZ.